A 39-amino-acid chain; its full sequence is Photosystem II reaction center protein J (39 aa).

The helical transmembrane segment at 7-27 (IPLWLVGLVGGLAVITMLSLF) threads the bilayer.

Belongs to the PsbJ family. As to quaternary structure, PSII is composed of 1 copy each of membrane proteins PsbA, PsbB, PsbC, PsbD, PsbE, PsbF, PsbH, PsbI, PsbJ, PsbK, PsbL, PsbM, PsbT, PsbX, PsbY, PsbZ, Psb30/Ycf12, at least 3 peripheral proteins of the oxygen-evolving complex and a large number of cofactors. It forms dimeric complexes.

It is found in the plastid. Its subcellular location is the chloroplast thylakoid membrane. In terms of biological role, one of the components of the core complex of photosystem II (PSII). PSII is a light-driven water:plastoquinone oxidoreductase that uses light energy to abstract electrons from H(2)O, generating O(2) and a proton gradient subsequently used for ATP formation. It consists of a core antenna complex that captures photons, and an electron transfer chain that converts photonic excitation into a charge separation. This Trieres chinensis (Marine centric diatom) protein is Photosystem II reaction center protein J.